We begin with the raw amino-acid sequence, 262 residues long: MAVGKNKRVSKGKKGAKKKVIDPFSRKEWYNLKAPVTFNVRNFGQTLVTKTIGTKLATDGLKGRVFEMSLADLNADEDQAYRKIKLSCEDVQGRNCLTDFHGTSVTRDKLCSLIRKNYSLIEAFADVKTLDGYNLRMFCVGYTKRRPGQLKSTCYVRSSKVRLIHKKMVAVMTNEASNSTLKELVKKVIPESIGKEIEKACKSIFPLQNVLVRKIKVLKKPKFDLTKLMESHNYSGEEEGHTLKVKESENATNLLTAELQSS.

Belongs to the eukaryotic ribosomal protein eS1 family. Component of the small ribosomal subunit. Mature ribosomes consist of a small (40S) and a large (60S) subunit. The 40S subunit contains about 33 different proteins and 1 molecule of RNA (18S). The 60S subunit contains about 49 different proteins and 3 molecules of RNA (25S, 5.8S and 5S).

It is found in the cytoplasm. This is Small ribosomal subunit protein eS1 from Theileria annulata.